A 113-amino-acid polypeptide reads, in one-letter code: Hydrogenase maturation factor HypA (113 aa).

Ni(2+) is bound at residue histidine 2. The Zn(2+) site is built by cysteine 73, cysteine 76, cysteine 89, and cysteine 92.

It belongs to the HypA/HybF family.

Functionally, involved in the maturation of [NiFe] hydrogenases. Required for nickel insertion into the metal center of the hydrogenase. This Rhodopseudomonas palustris (strain BisA53) protein is Hydrogenase maturation factor HypA.